We begin with the raw amino-acid sequence, 40 residues long: Submaxillary gland androgen-regulated protein 2, isoform epsilon (40 aa).

Residues 1–20 form the signal peptide; it reads MKALYMVFVLWVLIGCFLRC.

The protein resides in the secreted. May play a role in protection or detoxification. The sequence is that of Submaxillary gland androgen-regulated protein 2, isoform epsilon (Smr2) from Mus musculus (Mouse).